The primary structure comprises 557 residues: Dihydroxy-acid dehydratase (557 aa).

Cys47 lines the [2Fe-2S] cluster pocket. A Mg(2+)-binding site is contributed by Asp79. Position 120 (Cys120) interacts with [2Fe-2S] cluster. Mg(2+) contacts are provided by Asp121 and Lys122. Lys122 bears the N6-carboxylysine mark. A [2Fe-2S] cluster-binding site is contributed by Cys192. Residue Glu444 participates in Mg(2+) binding. Residue Ser470 is the Proton acceptor of the active site.

It belongs to the IlvD/Edd family. Homodimer. The cofactor is [2Fe-2S] cluster. It depends on Mg(2+) as a cofactor.

The catalysed reaction is (2R)-2,3-dihydroxy-3-methylbutanoate = 3-methyl-2-oxobutanoate + H2O. It carries out the reaction (2R,3R)-2,3-dihydroxy-3-methylpentanoate = (S)-3-methyl-2-oxopentanoate + H2O. It functions in the pathway amino-acid biosynthesis; L-isoleucine biosynthesis; L-isoleucine from 2-oxobutanoate: step 3/4. The protein operates within amino-acid biosynthesis; L-valine biosynthesis; L-valine from pyruvate: step 3/4. In terms of biological role, functions in the biosynthesis of branched-chain amino acids. Catalyzes the dehydration of (2R,3R)-2,3-dihydroxy-3-methylpentanoate (2,3-dihydroxy-3-methylvalerate) into 2-oxo-3-methylpentanoate (2-oxo-3-methylvalerate) and of (2R)-2,3-dihydroxy-3-methylbutanoate (2,3-dihydroxyisovalerate) into 2-oxo-3-methylbutanoate (2-oxoisovalerate), the penultimate precursor to L-isoleucine and L-valine, respectively. This Parasynechococcus marenigrum (strain WH8102) protein is Dihydroxy-acid dehydratase.